A 188-amino-acid chain; its full sequence is Thymidine kinase (188 aa).

17–24 is an ATP binding site; that stretch reads GPMFAGKT. The active-site Proton acceptor is the Glu-92. Substrate is bound at residue Phe-121. Positions 146 and 149 each coordinate Zn(2+). 166-170 serves as a coordination point for substrate; it reads LILAG. Positions 179 and 182 each coordinate Zn(2+).

The protein belongs to the thymidine kinase family.

The enzyme catalyses thymidine + ATP = dTMP + ADP + H(+). Its function is as follows. Phosphorylates thymidine. ASFV replicates in the cytoplasm of infected cells and contains genes encoding a number of enzymes needed for DNA synthesis, including thymidine kinase. Important for growth in swine macrophages in vitro and is a virus virulence factor in swine. This is Thymidine kinase from Ornithodoros (relapsing fever ticks).